The following is a 540-amino-acid chain: Chaperonin GroEL (540 aa).

Residues 30-33 (TLAP), Lys-51, 87-91 (DGTTT), Gly-415, 479-481 (NAA), and Asp-495 each bind ATP.

The protein belongs to the chaperonin (HSP60) family. As to quaternary structure, forms a cylinder of 14 subunits composed of two heptameric rings stacked back-to-back. Interacts with the co-chaperonin GroES.

It is found in the cytoplasm. The enzyme catalyses ATP + H2O + a folded polypeptide = ADP + phosphate + an unfolded polypeptide.. Its function is as follows. Together with its co-chaperonin GroES, plays an essential role in assisting protein folding. The GroEL-GroES system forms a nano-cage that allows encapsulation of the non-native substrate proteins and provides a physical environment optimized to promote and accelerate protein folding. This chain is Chaperonin GroEL, found in Methylovorus sp. (strain SS1 / DSM 11726).